The following is a 195-amino-acid chain: CDP-diacylglycerol--glycerol-3-phosphate 3-phosphatidyltransferase (195 aa).

4 helical membrane-spanning segments follow: residues 7–24 (ITVLRVLLIPIFILLFYL), 60–81 (FGAFLDPVADKLMVAVALVLLV), 134–150 (MLALVILLANPPAFTFW), and 157–173 (FLLIAGGLTLWSMLQYL).

It belongs to the CDP-alcohol phosphatidyltransferase class-I family.

The protein resides in the cell membrane. It catalyses the reaction a CDP-1,2-diacyl-sn-glycerol + sn-glycerol 3-phosphate = a 1,2-diacyl-sn-glycero-3-phospho-(1'-sn-glycero-3'-phosphate) + CMP + H(+). It participates in phospholipid metabolism; phosphatidylglycerol biosynthesis; phosphatidylglycerol from CDP-diacylglycerol: step 1/2. In terms of biological role, this protein catalyzes the committed step to the synthesis of the acidic phospholipids. The chain is CDP-diacylglycerol--glycerol-3-phosphate 3-phosphatidyltransferase (pgsA) from Pseudomonas fluorescens.